Here is a 534-residue protein sequence, read N- to C-terminus: GPI transamidase component GPI17 (534 aa).

Residues 1-8 (MSNANLRK) lie on the Cytoplasmic side of the membrane. The chain crosses the membrane as a helical span at residues 9–29 (WVGFCFVAIYLFLGVPLWYKL). Topologically, residues 30–472 (TTVYRASLPI…VQQNFFPQEH (443 aa)) are lumenal. N-linked (GlcNAc...) asparagine glycosylation is found at asparagine 100, asparagine 170, asparagine 228, asparagine 247, and asparagine 299. Residues 473–493 (MIAVYLPLLGPISAVMFFGFY) traverse the membrane as a helical segment. Residues 494–534 (NVMKEKNQKSKKNGTEREVAKEKLELKEAQKLHAIDGEDEL) lie on the Cytoplasmic side of the membrane.

This sequence belongs to the PIGS family. In terms of assembly, forms a complex with CDC91, GPI16, GPI8 and GAA1. Post-translationally, N-glycosylated.

Its subcellular location is the endoplasmic reticulum membrane. Its pathway is glycolipid biosynthesis; glycosylphosphatidylinositol-anchor biosynthesis. Component of the GPI transamidase complex. Involved in transfer of GPI to proteins. The protein is GPI transamidase component GPI17 (GPI17) of Saccharomyces cerevisiae (strain ATCC 204508 / S288c) (Baker's yeast).